Reading from the N-terminus, the 112-residue chain is Protein Churchill (112 aa).

The Zn(2+) site is built by C2, C5, C30, C33, H59, C61, C64, H66, H71, C88, and C91.

It belongs to the Churchill family.

In terms of biological role, transcriptional activator that mediates FGF signaling during neural development. Plays a role in the regulation of cell movement. Does not bind DNA by itself. The sequence is that of Protein Churchill (CHURC1) from Homo sapiens (Human).